Here is a 465-residue protein sequence, read N- to C-terminus: 23S rRNA (uracil(1939)-C(5))-methyltransferase RlmD (465 aa).

Residues 1-22 (MSEAVPTSARKSRNAPVAPGPA) form a disordered region. Residues 16 to 80 (PVAPGPAPVL…PSYEQATVVD (65 aa)) enclose the TRAM domain. [4Fe-4S] cluster is bound by residues cysteine 93, cysteine 99, cysteine 102, and cysteine 181. S-adenosyl-L-methionine is bound by residues glutamine 289, phenylalanine 318, asparagine 323, glutamate 339, asparagine 367, and aspartate 388. Cysteine 421 functions as the Nucleophile in the catalytic mechanism.

This sequence belongs to the class I-like SAM-binding methyltransferase superfamily. RNA M5U methyltransferase family. RlmD subfamily.

The catalysed reaction is uridine(1939) in 23S rRNA + S-adenosyl-L-methionine = 5-methyluridine(1939) in 23S rRNA + S-adenosyl-L-homocysteine + H(+). In terms of biological role, catalyzes the formation of 5-methyl-uridine at position 1939 (m5U1939) in 23S rRNA. This chain is 23S rRNA (uracil(1939)-C(5))-methyltransferase RlmD, found in Burkholderia lata (strain ATCC 17760 / DSM 23089 / LMG 22485 / NCIMB 9086 / R18194 / 383).